The sequence spans 308 residues: Acetaldehyde dehydrogenase 2 (308 aa).

9–12 (SGNI) contacts NAD(+). The Acyl-thioester intermediate role is filled by Cys127. Residues 158-166 (SAGPGTRAN) and Asn286 contribute to the NAD(+) site.

The protein belongs to the acetaldehyde dehydrogenase family.

The enzyme catalyses acetaldehyde + NAD(+) + CoA = acetyl-CoA + NADH + H(+). This Parafrankia sp. (strain EAN1pec) protein is Acetaldehyde dehydrogenase 2.